A 1026-amino-acid polypeptide reads, in one-letter code: Maternal effect protein staufen (1026 aa).

Residues 16–29 show a composition bias toward basic residues; sequence AAHHHSHSHAHMHL. Disordered stretches follow at residues 16–159, 190–210, and 234–311; these read AAHH…QLPP, NHYG…SNYA, and TPVP…KDKT. Positions 70-111 are enriched in low complexity; the sequence is AQQQQQQQTSSNQAGAVAAAGAAYHHGNINSNSGSNISSNSN. Over residues 112-126 the composition is skewed to polar residues; sequence QMQKIRQQHQHLSSS. 2 stretches are compositionally biased toward low complexity: residues 192 to 210 and 234 to 256; these read YGSN…SNYA and TPVP…NSTV. Basic and acidic residues predominate over residues 267-284; the sequence is TSQKPETRQEPASADDHV. Polar residues predominate over residues 285–303; the sequence is STGNIDATGALSNEDTSSS. 2 DRBM domains span residues 311–378 and 490–557; these read TPMC…ETMY and PKFP…VLKT. 2 positions are modified to phosphoserine: Ser563 and Ser570. The DRBM 3 domain maps to 578–645; it reads SPISQVHEIG…AEKMLVELQK (68 aa). Positions 606, 608, 628, 629, and 632 each coordinate RNA. The segment at 647–707 is disordered; sequence PPLTPTKQTP…PPKDKLIDMD (61 aa). Phosphothreonine occurs at positions 650 and 655. Position 676 is a phosphoserine (Ser676). Residues 678–688 are compositionally biased toward polar residues; that stretch reads VSGTDGPTQTG. Positions 711 to 781 constitute a DRBM 4 domain; sequence NPITKLIQLQ…AQALFELLEA (71 aa). Residues 855–948 form a disordered region; the sequence is ESKEEEANKE…SNSTSNTQSA (94 aa). Residues 864–890 are compositionally biased toward low complexity; the sequence is EVAVAAEENSNNSANSGDSSNSSSGDS. Polar residues predominate over residues 891-901; the sequence is QATEAASESAL. Composition is skewed to low complexity over residues 902 to 920 and 934 to 947; these read NTST…SNVG and NTES…NTQS. Residues 951 to 1018 form the DRBM 5 domain; that stretch reads HMKEQLLYLS…ASNALKILSK (68 aa).

In terms of assembly, component of neuronal ribonucleoprotein complexes (RNPs) that contains at least various translational repressor and mRNA turnover proteins such as me31B, tral, Upf1, AGO2 and sometimes Fmr1. Polar granules at the posterior pole of the oocyte, and by the time the egg is laid, at the anterior pole.

It localises to the cytoplasm. It is found in the cytoplasmic ribonucleoprotein granule. Its function is as follows. RNA-binding protein which forms ribonucleoprotein complexes (RNPs) that play critical roles in the localization, translational repression and turnover of RNAs during embryogenesis, neurotransmission and neurogenesis. In the oocyte, essential for the localization of both the osk/oskar mRNA to the posterior pole and bcd/bicoid RNA to the anterior pole, and is therefore required for the correct anterior-posterior patterning of the developing embryo. Association with osk or bcd at their respective poles, appears to promote the formation and stabilization of the ribonucleoprotein complexes. Integral component of diverse neuritic ribonucleoprotein complexes (RNPs) that mediate the transport, translation and turnover of neuronal RNAs during neuorgenesis and the translation repression of synaptic transcripts in preparation for their dendritic targeting. This chain is Maternal effect protein staufen (stau), found in Drosophila melanogaster (Fruit fly).